The chain runs to 716 residues: Cyclic nucleotide-gated ion channel 1 (716 aa).

Topologically, residues 1 to 97 are cytoplasmic; sequence MNFRQEKFVR…QGPFLQRWNK (97 aa). Residues 98–118 traverse the membrane as a helical segment; sequence IFVLACIIAVSLDPLFFYVPI. Residues 119-132 are Extracellular-facing; it reads IDDAKKCLGIDKKM. A helical transmembrane segment spans residues 133 to 153; the sequence is EITASVLRSFTDVFYVLHIIF. Over 154–187 the chain is Cytoplasmic; that stretch reads QFRTGFIAPSSRVFGRGVLVEDKREIAKRYLSSH. The helical transmembrane segment at 188 to 208 threads the bilayer; sequence FIIDILAVLPLPQMVILIIIP. Over 209-220 the chain is Extracellular; sequence HMRGSSSLNTKN. A helical transmembrane segment spans residues 221–241; that stretch reads MLKFIVFFQYIPRFIRIYPLY. Topologically, residues 242-259 are cytoplasmic; sequence KEVTRTSGILTETAWAGA. Residues 260–280 form a helical membrane-spanning segment; the sequence is AFNLFLYMLASHVFGAFWYLF. The Extracellular segment spans residues 281 to 379; it reads SIERETVCWK…GQNLKTSTYI (99 aa). A helical transmembrane segment spans residues 380-400; sequence WEICFAVFISIAGLVLFSFLI. Topologically, residues 401–716 are cytoplasmic; it reads GNMQTYLQST…PAEPDFNSDD (316 aa). A nucleoside 3',5'-cyclic phosphate-binding positions include 486 to 610 and glutamate 557; that span reads MFEK…SKQL. Residues 602-617 form a calmodulin-binding region; that stretch reads FRRLHSKQLRHTFRYY. The IQ domain occupies 622–651; it reads KTWAACFIQAAWRRYIKKKLEESLKEEENR. The disordered stretch occupies residues 689–716; the sequence is SVRKPRMPERMPPMLLQKPAEPDFNSDD.

Belongs to the cyclic nucleotide-gated cation channel (TC 1.A.1.5) family. Homotetramer or heterotetramer (Potential). Binds calmodulin-2/3/5 with a higher affinity than calmodulin-1/4. In terms of tissue distribution, expressed in the whole plant but only weakly in roots.

It localises to the cell membrane. In terms of biological role, acts as a cyclic nucleotide-gated ion channel. Can be activated by cyclic AMP which leads to an opening of the cation channel. May be responsible for cAMP-induced calcium entry in cells and thus should be involved in the calcium signal transduction. Could transport K(+), Na(+) and Pb(2+). The chain is Cyclic nucleotide-gated ion channel 1 (CNGC1) from Arabidopsis thaliana (Mouse-ear cress).